The primary structure comprises 77 residues: Cysteine-rich protein 1 (77 aa).

One can recognise an LIM zinc-binding domain in the interval 2–63; sequence PKCPKCNKEV…HPCYAAMFGP (62 aa). An N6-acetyllysine mark is found at Lys-9 and Lys-22. An Omega-N-methylarginine modification is found at Arg-68.

In terms of biological role, seems to have a role in zinc absorption and may function as an intracellular zinc transport protein. The polypeptide is Cysteine-rich protein 1 (CRIP1) (Homo sapiens (Human)).